Reading from the N-terminus, the 152-residue chain is Transcriptional regulator MraZ (152 aa).

2 SpoVT-AbrB domains span residues Ala-5–Glu-52 and Ala-81–Met-124.

It belongs to the MraZ family. Forms oligomers.

It localises to the cytoplasm. The protein resides in the nucleoid. The protein is Transcriptional regulator MraZ of Psychromonas ingrahamii (strain DSM 17664 / CCUG 51855 / 37).